Reading from the N-terminus, the 324-residue chain is Olfactory receptor 5A2 (324 aa).

At 1-26 (MAVGRNNTIVTKFILLGLSDHPQMKI) the chain is on the extracellular side. A glycan (N-linked (GlcNAc...) asparagine) is linked at N6. Residues 27–47 (FLFMLFLGLYLLTLAWNLSLI) form a helical membrane-spanning segment. The Cytoplasmic portion of the chain corresponds to 48–55 (ALIKMDSH). The chain crosses the membrane as a helical span at residues 56 to 76 (LHMPMYFFLSNLSFLDICYVS). Residues 77–100 (STAPKMLSDIITEQKTISFVGCAT) are Extracellular-facing. A disulfide bridge links C98 with C190. Residues 101–121 (QYFVFCGMGLTECFLLAAMAY) traverse the membrane as a helical segment. Residues 122–134 (DRYAAICNPLLYT) lie on the Cytoplasmic side of the membrane. Residues 135 to 155 (VLISHTLCLKMVVGAYVGGFL) traverse the membrane as a helical segment. The Extracellular portion of the chain corresponds to 156-197 (SSFIETYSVYQHDFCGPYMINHFFCDLPPVLALSCSDTFTSE). The helical transmembrane segment at 198–218 (VVTFIVSVVVGIVSVLVVLIS) threads the bilayer. The Cytoplasmic portion of the chain corresponds to 219 to 238 (YGYIVAAVVKISSATGRTKA). Residues 239-259 (FSTCASHLTAVTLFYGSGFFM) traverse the membrane as a helical segment. Residues 260-272 (YMRPSSSYSLNRD) are Extracellular-facing. A helical transmembrane segment spans residues 273–293 (KVVSIFYALVIPVVNPIIYSF). The Cytoplasmic segment spans residues 294-324 (RNKEIKNAMRKAMERDPGISHGGPFIFMTLG).

It belongs to the G-protein coupled receptor 1 family.

The protein resides in the cell membrane. In terms of biological role, odorant receptor. This chain is Olfactory receptor 5A2 (OR5A2), found in Homo sapiens (Human).